Consider the following 96-residue polypeptide: Protein RnfH (96 aa).

This sequence belongs to the UPF0125 (RnfH) family.

The protein is Protein RnfH of Hahella chejuensis (strain KCTC 2396).